A 171-amino-acid polypeptide reads, in one-letter code: Small ribosomal subunit protein uS5 (171 aa).

Residues 14–77 (YIEKLVNIRR…DKARKAMKNV (64 aa)) enclose the S5 DRBM domain.

Belongs to the universal ribosomal protein uS5 family. As to quaternary structure, part of the 30S ribosomal subunit. Contacts proteins S4 and S8.

Functionally, with S4 and S12 plays an important role in translational accuracy. Located at the back of the 30S subunit body where it stabilizes the conformation of the head with respect to the body. The chain is Small ribosomal subunit protein uS5 from Vesicomyosocius okutanii subsp. Calyptogena okutanii (strain HA).